A 450-amino-acid chain; its full sequence is Signal recognition particle 54 kDa protein (450 aa).

GTP-binding positions include 107–114 (GIQGSGKT), 188–192 (DTAGR), and 247–250 (TKLD).

This sequence belongs to the GTP-binding SRP family. SRP54 subfamily. Part of the signal recognition particle protein translocation system, which is composed of SRP and FtsY. Archaeal SRP consists of a 7S RNA molecule of 300 nucleotides and two protein subunits: SRP54 and SRP19.

It localises to the cytoplasm. The catalysed reaction is GTP + H2O = GDP + phosphate + H(+). Involved in targeting and insertion of nascent membrane proteins into the cytoplasmic membrane. Binds to the hydrophobic signal sequence of the ribosome-nascent chain (RNC) as it emerges from the ribosomes. The SRP-RNC complex is then targeted to the cytoplasmic membrane where it interacts with the SRP receptor FtsY. This Methanococcus maripaludis (strain C5 / ATCC BAA-1333) protein is Signal recognition particle 54 kDa protein.